The following is a 342-amino-acid chain: Phosphate acyltransferase (342 aa).

It belongs to the PlsX family. As to quaternary structure, homodimer. Probably interacts with PlsY.

It localises to the cytoplasm. The enzyme catalyses a fatty acyl-[ACP] + phosphate = an acyl phosphate + holo-[ACP]. The protein operates within lipid metabolism; phospholipid metabolism. Functionally, catalyzes the reversible formation of acyl-phosphate (acyl-PO(4)) from acyl-[acyl-carrier-protein] (acyl-ACP). This enzyme utilizes acyl-ACP as fatty acyl donor, but not acyl-CoA. This chain is Phosphate acyltransferase, found in Actinobacillus succinogenes (strain ATCC 55618 / DSM 22257 / CCUG 43843 / 130Z).